An 83-amino-acid chain; its full sequence is Large ribosomal subunit protein eL43 (83 aa).

The Zn(2+) site is built by Cys38, Cys41, Cys56, and Cys59. A C4-type zinc finger spans residues 38–59 (CPVCGRRAVKRISTGIWQCTKC).

It belongs to the eukaryotic ribosomal protein eL43 family. Putative zinc-binding subfamily. In terms of assembly, part of the 50S ribosomal subunit. Requires Zn(2+) as cofactor.

Binds to the 23S rRNA. This chain is Large ribosomal subunit protein eL43, found in Pyrococcus horikoshii (strain ATCC 700860 / DSM 12428 / JCM 9974 / NBRC 100139 / OT-3).